A 403-amino-acid polypeptide reads, in one-letter code: MSNVKKVVLAYSGGLDTSAIVPWLKENYGCEVVAFVADVGQGAEELEGVEEKAKASGASECHVVDLKDEFVKNYVYPTLKTGAIYEGTYLLGTAMARPIIAKAQVEVARKVGADALSHGCTGKGNDQVRFESCYAALAPDLQVIAPWREWELSSRESLLGYLAERNIPCSASATKIYSRDANAWHISHEGGELEDPWCEPTEKVWTMTASPEQAPDKPEYLCVTVENGEIVAVNNQALSPFECLSVLNDVAAKHGVGRVDIVENRLVGMKSRGCYETPGGTVMMAALQAIDELVLDKVSRSWKTQLSEQFAQLLYDGRWFTPLQQSVMAAAQSLCATASGEVVLKLYKGSVTAVQKRSPHSLYSEDFATFGADEVYNQAHAEGFIRLFSLPSRIAALQKQQKG.

ATP contacts are provided by residues 10–18 (AYSGGLDTS) and A37. Y89 provides a ligand contact to L-citrulline. Residue G119 participates in ATP binding. 3 residues coordinate L-aspartate: T121, N125, and D126. An L-citrulline-binding site is contributed by N125. R129, S178, S187, E263, and Y275 together coordinate L-citrulline.

The protein belongs to the argininosuccinate synthase family. Type 1 subfamily. As to quaternary structure, homotetramer.

It is found in the cytoplasm. It catalyses the reaction L-citrulline + L-aspartate + ATP = 2-(N(omega)-L-arginino)succinate + AMP + diphosphate + H(+). It functions in the pathway amino-acid biosynthesis; L-arginine biosynthesis; L-arginine from L-ornithine and carbamoyl phosphate: step 2/3. The sequence is that of Argininosuccinate synthase from Idiomarina loihiensis (strain ATCC BAA-735 / DSM 15497 / L2-TR).